The sequence spans 339 residues: Intelectin-1 (339 aa).

The first 18 residues, 1–18 (MLSYSLLLLALAFPAGHA), serve as a signal peptide directing secretion. A Fibrinogen C-terminal domain is found at 58–108 (GDMNYGYRSCNEIKSSDSRAPDGIYTLATEDGESYQTFCDMTTNGGGWTLV). A disulfide bridge links Cys67 with Cys96. Ca(2+) contacts are provided by His112, Glu113, Asn115, Gly118, Gly123, Asp124, and Asp159. Cystine bridges form between Cys120-Cys306, Cys225-Cys285, and Cys277-Cys291. The N-linked (GlcNAc...) asparagine glycan is linked to Asn189. Positions 286, 288, 300, and 308 each coordinate Ca(2+). A carbohydrate is bound by residues 288–289 (EH) and Glu300.

Homotrimer; disulfide-linked. Homohexamer; disulfide-linked. Forms primarily homotrimers in solution, but can also form homohexamers. N-glycosylated.

Its subcellular location is the secreted. It localises to the cytoplasmic vesicle. The protein resides in the secretory vesicle. In terms of biological role, lectin that specifically recognizes microbial carbohydrate chains in a calcium-dependent manner. Binds to microbial glycans that contain a terminal acyclic 1,2-diol moiety, including beta-linked D-galactofuranose (beta-Galf) and D-phosphoglycerol-modified glycans. Binds to S.pneumoniae serotypes with glycans that contain beta-linked D-galactofuranose (beta-Galf) and with D-phosphoglycerol-modified glycans. Can bind a variety of monosaccharides (in vitro). Probably plays a role in the defense system against microorganisms. This chain is Intelectin-1 (itln1), found in Xenopus laevis (African clawed frog).